A 513-amino-acid chain; its full sequence is ATP synthase subunit alpha (513 aa).

ATP is bound at residue 169-176 (GDRQTGKT).

It belongs to the ATPase alpha/beta chains family. F-type ATPases have 2 components, CF(1) - the catalytic core - and CF(0) - the membrane proton channel. CF(1) has five subunits: alpha(3), beta(3), gamma(1), delta(1), epsilon(1). CF(0) has three main subunits: a(1), b(2) and c(9-12). The alpha and beta chains form an alternating ring which encloses part of the gamma chain. CF(1) is attached to CF(0) by a central stalk formed by the gamma and epsilon chains, while a peripheral stalk is formed by the delta and b chains.

It localises to the cell inner membrane. The catalysed reaction is ATP + H2O + 4 H(+)(in) = ADP + phosphate + 5 H(+)(out). Produces ATP from ADP in the presence of a proton gradient across the membrane. The alpha chain is a regulatory subunit. The chain is ATP synthase subunit alpha from Shewanella baltica (strain OS223).